We begin with the raw amino-acid sequence, 183 residues long: Beta-defensin 129 (183 aa).

The signal sequence occupies residues 1 to 19 (MKLLFPIFASLMLQYQVNT). 3 cysteine pairs are disulfide-bonded: cysteine 27/cysteine 53, cysteine 34/cysteine 48, and cysteine 38/cysteine 54. The interval 141-183 (TATSTKSNTKESRDSATASPPPAPPPPNILPTPSLELEEAEEQ) is disordered. Positions 159–170 (SPPPAPPPPNIL) are enriched in pro residues.

The protein belongs to the beta-defensin family.

Its subcellular location is the secreted. Has antibacterial activity. In Pan troglodytes (Chimpanzee), this protein is Beta-defensin 129 (DEFB129).